The following is a 452-amino-acid chain: UDP-N-acetylmuramoyl-tripeptide--D-alanyl-D-alanine ligase (452 aa).

Position 113 to 119 (Gly113 to Thr119) interacts with ATP.

It belongs to the MurCDEF family. MurF subfamily.

The protein resides in the cytoplasm. It catalyses the reaction UDP-N-acetyl-alpha-D-muramoyl-L-alanyl-gamma-D-glutamyl-L-lysine + D-alanyl-D-alanine + ATP = UDP-N-acetyl-alpha-D-muramoyl-L-alanyl-gamma-D-glutamyl-L-lysyl-D-alanyl-D-alanine + ADP + phosphate + H(+). It participates in cell wall biogenesis; peptidoglycan biosynthesis. In terms of biological role, involved in cell wall formation. Catalyzes the final step in the synthesis of UDP-N-acetylmuramoyl-pentapeptide, the precursor of murein. Catalyzes the addition of D-alanyl-D-alanine to UDP-MurNAc-L-alanyl-gamma-D-glutamyl-L-lysine. In vitro, can also use the mesodiaminopimelic acid-containing form of UDP-MurNAc-tripeptide, with the same efficiency, revealing that the discrimination for the amino acid residue at the third position of the peptide in the peptidoglycans is entirely supported by MurE. This is UDP-N-acetylmuramoyl-tripeptide--D-alanyl-D-alanine ligase from Staphylococcus aureus (strain NCTC 8325 / PS 47).